We begin with the raw amino-acid sequence, 197 residues long: Nucleoside triphosphate pyrophosphatase (197 aa).

The active-site Proton acceptor is the Asp71.

The protein belongs to the Maf family. The cofactor is a divalent metal cation.

It is found in the cytoplasm. The catalysed reaction is a ribonucleoside 5'-triphosphate + H2O = a ribonucleoside 5'-phosphate + diphosphate + H(+). The enzyme catalyses a 2'-deoxyribonucleoside 5'-triphosphate + H2O = a 2'-deoxyribonucleoside 5'-phosphate + diphosphate + H(+). Functionally, nucleoside triphosphate pyrophosphatase. May have a dual role in cell division arrest and in preventing the incorporation of modified nucleotides into cellular nucleic acids. This chain is Nucleoside triphosphate pyrophosphatase, found in Nostoc punctiforme (strain ATCC 29133 / PCC 73102).